A 153-amino-acid polypeptide reads, in one-letter code: Interleukin-4 (153 aa).

An N-terminal signal peptide occupies residues Met1–Gly24. 3 disulfides stabilise this stretch: Cys27-Cys151, Cys48-Cys89, and Cys70-Cys123. The N-linked (GlcNAc...) asparagine glycan is linked to Asn62.

The protein belongs to the IL-4/IL-13 family.

The protein localises to the secreted. In terms of biological role, participates in at least several B-cell activation processes as well as of other cell types. It is a costimulator of DNA-synthesis. It induces the expression of class II MHC molecules on resting B-cells. It enhances both secretion and cell surface expression of IgE and IgG1. It also regulates the expression of the low affinity Fc receptor for IgE (CD23) on both lymphocytes and monocytes. Positively regulates IL31RA expression in macrophages. Stimulates autophagy in dendritic cells by interfering with mTORC1 signaling and through the induction of RUFY4. This Cercocebus atys (Sooty mangabey) protein is Interleukin-4 (IL4).